A 152-amino-acid polypeptide reads, in one-letter code: MESGTEEYELNGDLRPGSPGSPDALPPRWGLRNRPINVNHYANKKSAAESMLDIALLMANASQLKAVVEQGNDFAFFVPLVVLISISLVLQIGVGVLLIFLVKYDLNNPAKHAKLDFLNNLATGLVFIIVVVNIFITAFGVQKPVMDVAPRQ.

Methionine 1 bears the N-acetylmethionine mark. Over residues 1-10 (MESGTEEYEL) the composition is skewed to acidic residues. Residues 1–29 (MESGTEEYELNGDLRPGSPGSPDALPPRW) form a disordered region. Topologically, residues 1 to 78 (MESGTEEYEL…EQGNDFAFFV (78 aa)) are extracellular. A phosphoserine mark is found at serine 18 and serine 21. Positions 26-37 (PPRWGLRNRPIN) are N-terminal adhesion motif. The required to induce plasma membrane rupture stretch occupies residues 40-69 (HYANKKSAAESMLDIALLMANASQLKAVVE). Residues 44 to 55 (KKSAAESMLDIA) are helix alpha1. Residues 58–74 (MANASQLKAVVEQGNDF) form a helix alpha2 region. An N-linked (GlcNAc...) asparagine glycan is attached at asparagine 60. A helical transmembrane segment spans residues 79-103 (PLVVLISISLVLQIGVGVLLIFLVK). The Cytoplasmic portion of the chain corresponds to 104–113 (YDLNNPAKHA). Residues 114–138 (KLDFLNNLATGLVFIIVVVNIFITA) traverse the membrane as a helical segment. Topologically, residues 139–152 (FGVQKPVMDVAPRQ) are extracellular.

Belongs to the ninjurin family. In terms of assembly, homodimer; in absence of death stimuli, forms an inactive homodimer. Homooligomer; in response to death stimuli, homooligomerizes into long, highly branched filaments and large, ring-shaped structures in the membrane. In terms of processing, cleaved by MMP9 protease to generate the Secreted ninjurin-1 form. N-linked glycosylation is required for homooligomerization.

It is found in the cell membrane. It localises to the synaptic cell membrane. Its subcellular location is the secreted. With respect to regulation, in response to death stimuli, homooligomerizes and disrupts membrane integrity by introducing the hydrophilic faces of alpha1 and alpha2 helices into the hydrophobic membrane. Homooligomerization and ability to mediate plasma membrane rupture is inhibited by glycine; it is unclear whether glycine directly or indirectly inhibits homooligomerization. In normal conditions, NINJ1 is autoinhibited via formation of a homodimer: in the inactive homodimer, the alpha1 and alpha2 helices (residues 44-74) form a single transmembrane region without a kink, in which hydrophilic faces of alpha1 and alpha2 helices are sequestered. Its function is as follows. Effector of various programmed cell death, such as pyroptosis and necroptosis, which mediates plasma membrane rupture (cytolysis). Oligomerizes in response to death stimuli and forms ring-like structures on the plasma membrane: acts by cutting and shedding membrane disks, like a cookie cutter, leading to membrane damage and loss that cannot be repaired by the cell. Plasma membrane rupture leads to release intracellular molecules named damage-associated molecular patterns (DAMPs) that propagate the inflammatory response. Mechanistically, mediates plasma membrane rupture by introducing hydrophilic faces of 2 alpha helices into the hydrophobic membrane. Induces plasma membrane rupture downstream of Gasdermin (GSDMA, GSDMB, GSDMC, GSDMD, or GSDME) or MLKL during pyroptosis or necroptosis, respectively. Acts as an effector of PANoptosis downstream of CASP1, CASP4, CASP8 and RIPK3. Also induces plasma membrane rupture in response to cell swelling caused by osmotic stress and ferroptosis downstream of lipid peroxidation. Acts as a regulator of Toll-like receptor 4 (TLR4) signaling triggered by lipopolysaccharide (LPS) during systemic inflammation; directly binds LPS. Involved in leukocyte migration during inflammation by promoting transendothelial migration of macrophages via homotypic binding. Promotes the migration of monocytes across the brain endothelium to central nervous system inflammatory lesions. Also acts as a homophilic transmembrane adhesion molecule involved in various processes such as axonal growth, cell chemotaxis and angiogenesis. Promotes cell adhesion by mediating homophilic interactions via its extracellular N-terminal adhesion motif (N-NAM). Involved in the progression of the inflammatory stress by promoting cell-to-cell interactions between immune cells and endothelial cells. Plays a role in nerve regeneration by promoting maturation of Schwann cells. Acts as a regulator of angiogenesis. Promotes the formation of new vessels by mediating the interaction between capillary pericyte cells and endothelial cells. Also mediates vascular functions in penile tissue as well as vascular formation. Promotes osteoclasts development by enhancing the survival of prefusion osteoclasts. Also involved in striated muscle growth and differentiation. Also involved in cell senescence in a p53/TP53 manner, possibly by acting as an indirect regulator of p53/TP53 mRNA translation. Functionally, secreted form generated by cleavage, which has chemotactic activity. Acts as an anti-inflammatory mediator by promoting monocyte recruitment, thereby ameliorating atherosclerosis. The chain is Ninjurin-1 from Mus musculus (Mouse).